A 168-amino-acid chain; its full sequence is MATVTSAAVSIPSFTGLKAGSASNAKVSASAKVSASPLPRLSIKASMKDVGAAVVATAASAMIASNAMAIDVLLGADDGSLAFVPSEFSISPGEKIVFKNNAGFPHNIVFDEDSIPSGVDASKISMSEEDLLNAKGETFEVALSNKGEYSFYCSPHQGAGMVGKVTVN.

The transit peptide at 1 to 69 (MATVTSAAVS…SAMIASNAMA (69 aa)) directs the protein to the chloroplast. Residues 70-168 (IDVLLGADDG…AGMVGKVTVN (99 aa)) form the Plastocyanin-like domain. Cu cation is bound by residues His-106, Cys-153, His-156, and Met-161.

The protein belongs to the plastocyanin family. It depends on Cu(2+) as a cofactor.

It localises to the plastid. Its subcellular location is the chloroplast thylakoid membrane. Participates in electron transfer between P700 and the cytochrome b6-f complex in photosystem I. This chain is Plastocyanin A, chloroplastic (PETE), found in Populus nigra (Lombardy poplar).